A 44-amino-acid chain; its full sequence is Cuticle protein CP463 (44 aa).

2 consecutive repeat copies span residues 3 to 20 (LLEG…KKYL) and 27 to 44 (VLLS…NVQF).

In terms of tissue distribution, calcified shell.

In Cancer pagurus (Rock crab), this protein is Cuticle protein CP463.